The chain runs to 364 residues: Protein-glutamate methylesterase/protein-glutamine glutaminase (364 aa).

The 119-residue stretch at 5-123 (RVLVVDDTIL…PAANKAALAN (119 aa)) folds into the Response regulatory domain. At D56 the chain carries 4-aspartylphosphate. Residues 174 to 364 (EIVVIGISTG…QEIVHTVKLY (191 aa)) form the CheB-type methylesterase domain. Catalysis depends on residues S181, H208, and D306.

Belongs to the CheB family. Post-translationally, phosphorylated by CheA. Phosphorylation of the N-terminal regulatory domain activates the methylesterase activity.

The protein localises to the cytoplasm. The enzyme catalyses [protein]-L-glutamate 5-O-methyl ester + H2O = L-glutamyl-[protein] + methanol + H(+). The catalysed reaction is L-glutaminyl-[protein] + H2O = L-glutamyl-[protein] + NH4(+). Involved in chemotaxis. Part of a chemotaxis signal transduction system that modulates chemotaxis in response to various stimuli. Catalyzes the demethylation of specific methylglutamate residues introduced into the chemoreceptors (methyl-accepting chemotaxis proteins or MCP) by CheR. Also mediates the irreversible deamidation of specific glutamine residues to glutamic acid. This chain is Protein-glutamate methylesterase/protein-glutamine glutaminase, found in Desulfotalea psychrophila (strain LSv54 / DSM 12343).